Here is a 228-residue protein sequence, read N- to C-terminus: Ribosomal RNA small subunit methyltransferase G (228 aa).

Residues glycine 92, phenylalanine 97, 115 to 117 (EAT), 143 to 144 (AE), and arginine 156 each bind S-adenosyl-L-methionine.

It belongs to the methyltransferase superfamily. RNA methyltransferase RsmG family.

It localises to the cytoplasm. Specifically methylates the N7 position of a guanine in 16S rRNA. In Thermosynechococcus vestitus (strain NIES-2133 / IAM M-273 / BP-1), this protein is Ribosomal RNA small subunit methyltransferase G.